Consider the following 152-residue polypeptide: UPF0225 protein Ent638_2310 (152 aa).

The protein belongs to the UPF0225 family.

This is UPF0225 protein Ent638_2310 from Enterobacter sp. (strain 638).